The chain runs to 454 residues: UPF0210 protein EUBELI_01067 (454 aa).

This sequence belongs to the UPF0210 family. As to quaternary structure, homodimer.

This chain is UPF0210 protein EUBELI_01067, found in Lachnospira eligens (strain ATCC 27750 / DSM 3376 / VPI C15-48 / C15-B4) (Eubacterium eligens).